We begin with the raw amino-acid sequence, 535 residues long: Cytochrome P450 monooxygenase claP (535 aa).

Helical transmembrane passes span 7–27 (IGTLDVLIFLVFLWLLSKLVG) and 225–245 (YFSMVIFLLAQVFPILLKLPT). Cys-472 provides a ligand contact to heme.

It belongs to the cytochrome P450 family. It depends on heme as a cofactor.

It localises to the membrane. Its pathway is secondary metabolite biosynthesis; terpenoid biosynthesis. Cytochrome P450 monooxygenase; part of the gene cluster that mediates the biosynthesis of clavilactone A, a meroterpenoid that features a unique benzo-fused ten-membered carbocyclic ring unit with an alpha,beta-epoxy-gamma-lactone moiety, forming an intriguing 10/5/3 tricyclic nested skeleton. Cytochrome P450 monooxygenases claO, claP, claQ, claU, and claW are close orthologs, suggesting that a redundant function or pseudogenes are present in the cla cluster. These monoxygenases are not involved in clavilactone A biosynthesis nor its modification. ClaR, ClaS and ClaT are sufficient to produce clavilactone A. The biosynthesis begins with the prenyltransferase claS that transfers geranyl pyrophosphate (GPP) to hydroquinone to produces geranylhydroquinone. The cytochrome P450 monooxygenase claR then catalyzes the diradical coupling reaction between the intramolecular hydroquinone and allyl moieties to form the benzo-fused ten-membered carbocyclic ring unit of wigantol. Finally the cytochrome P450 monooxygenase claT exquisitely and stereoselectively assembles the alpha,beta-epoxy-gamma-lactone moiety, producing clavilactone A via arnebinol A. This Ampulloclitocybe clavipes (Club foot) protein is Cytochrome P450 monooxygenase claP.